Reading from the N-terminus, the 333-residue chain is Ketol-acid reductoisomerase (NADP(+)) (333 aa).

Residues 1 to 171 (MSNDTQPKIA…GGARANIIKT (171 aa)) enclose the KARI N-terminal Rossmann domain. Residues 14–17 (YGSQ), arginine 37, threonine 42, and 72–75 (DMVQ) each bind NADP(+). Histidine 97 is a catalytic residue. Glycine 123 provides a ligand contact to NADP(+). Residues 172–317 (TFKEETETDL…KKLRAKMVWL (146 aa)) enclose the KARI C-terminal knotted domain. Mg(2+)-binding residues include aspartate 180, glutamate 184, glutamate 216, and glutamate 220. Serine 241 is a binding site for substrate.

Belongs to the ketol-acid reductoisomerase family. It depends on Mg(2+) as a cofactor.

The catalysed reaction is (2R)-2,3-dihydroxy-3-methylbutanoate + NADP(+) = (2S)-2-acetolactate + NADPH + H(+). The enzyme catalyses (2R,3R)-2,3-dihydroxy-3-methylpentanoate + NADP(+) = (S)-2-ethyl-2-hydroxy-3-oxobutanoate + NADPH + H(+). It functions in the pathway amino-acid biosynthesis; L-isoleucine biosynthesis; L-isoleucine from 2-oxobutanoate: step 2/4. It participates in amino-acid biosynthesis; L-valine biosynthesis; L-valine from pyruvate: step 2/4. In terms of biological role, involved in the biosynthesis of branched-chain amino acids (BCAA). Catalyzes an alkyl-migration followed by a ketol-acid reduction of (S)-2-acetolactate (S2AL) to yield (R)-2,3-dihydroxy-isovalerate. In the isomerase reaction, S2AL is rearranged via a Mg-dependent methyl migration to produce 3-hydroxy-3-methyl-2-ketobutyrate (HMKB). In the reductase reaction, this 2-ketoacid undergoes a metal-dependent reduction by NADPH to yield (R)-2,3-dihydroxy-isovalerate. The chain is Ketol-acid reductoisomerase (NADP(+)) from Xanthomonas oryzae pv. oryzae (strain MAFF 311018).